The following is a 457-amino-acid chain: Siroheme synthase (457 aa).

Residues 1-204 are precorrin-2 dehydrogenase /sirohydrochlorin ferrochelatase; it reads MDHLPIFCQL…ADEKAVNATT (204 aa). NAD(+) is bound by residues 22–23 and 43–44; these read DV and LN. A Phosphoserine modification is found at Ser-128. Positions 216-457 are uroporphyrinogen-III C-methyltransferase; that stretch reads GEVVLVGAGP…RDKLNWFSNH (242 aa). An S-adenosyl-L-methionine-binding site is contributed by Pro-225. Catalysis depends on Asp-248, which acts as the Proton acceptor. Catalysis depends on Lys-270, which acts as the Proton donor. S-adenosyl-L-methionine is bound by residues 301–303, Ile-306, 331–332, Met-382, and Gly-411; these read GGD and TA.

This sequence in the N-terminal section; belongs to the precorrin-2 dehydrogenase / sirohydrochlorin ferrochelatase family. It in the C-terminal section; belongs to the precorrin methyltransferase family.

It carries out the reaction uroporphyrinogen III + 2 S-adenosyl-L-methionine = precorrin-2 + 2 S-adenosyl-L-homocysteine + H(+). The enzyme catalyses precorrin-2 + NAD(+) = sirohydrochlorin + NADH + 2 H(+). The catalysed reaction is siroheme + 2 H(+) = sirohydrochlorin + Fe(2+). The protein operates within cofactor biosynthesis; adenosylcobalamin biosynthesis; precorrin-2 from uroporphyrinogen III: step 1/1. It participates in cofactor biosynthesis; adenosylcobalamin biosynthesis; sirohydrochlorin from precorrin-2: step 1/1. Its pathway is porphyrin-containing compound metabolism; siroheme biosynthesis; precorrin-2 from uroporphyrinogen III: step 1/1. It functions in the pathway porphyrin-containing compound metabolism; siroheme biosynthesis; siroheme from sirohydrochlorin: step 1/1. The protein operates within porphyrin-containing compound metabolism; siroheme biosynthesis; sirohydrochlorin from precorrin-2: step 1/1. In terms of biological role, multifunctional enzyme that catalyzes the SAM-dependent methylations of uroporphyrinogen III at position C-2 and C-7 to form precorrin-2 via precorrin-1. Then it catalyzes the NAD-dependent ring dehydrogenation of precorrin-2 to yield sirohydrochlorin. Finally, it catalyzes the ferrochelation of sirohydrochlorin to yield siroheme. The sequence is that of Siroheme synthase from Salmonella paratyphi A (strain ATCC 9150 / SARB42).